Consider the following 265-residue polypeptide: Shikimate dehydrogenase (NADP(+)) (265 aa).

Shikimate is bound by residues 15 to 17 (SLS) and threonine 62. The Proton acceptor role is filled by lysine 66. 2 residues coordinate shikimate: asparagine 87 and aspartate 102. NADP(+)-binding positions include 125–129 (GAGGA), 149–154 (NRTLEK), and leucine 209. Residue tyrosine 211 coordinates shikimate. Glycine 233 provides a ligand contact to NADP(+).

This sequence belongs to the shikimate dehydrogenase family. Homodimer.

The enzyme catalyses shikimate + NADP(+) = 3-dehydroshikimate + NADPH + H(+). It functions in the pathway metabolic intermediate biosynthesis; chorismate biosynthesis; chorismate from D-erythrose 4-phosphate and phosphoenolpyruvate: step 4/7. Functionally, involved in the biosynthesis of the chorismate, which leads to the biosynthesis of aromatic amino acids. Catalyzes the reversible NADPH linked reduction of 3-dehydroshikimate (DHSA) to yield shikimate (SA). The protein is Shikimate dehydrogenase (NADP(+)) of Legionella pneumophila subsp. pneumophila (strain Philadelphia 1 / ATCC 33152 / DSM 7513).